The chain runs to 88 residues: Small ribosomal subunit protein bS20 (88 aa).

The segment at 1-23 is disordered; sequence MANSPQAKKRARQNDKARAHNAS.

This sequence belongs to the bacterial ribosomal protein bS20 family.

Binds directly to 16S ribosomal RNA. The sequence is that of Small ribosomal subunit protein bS20 from Saccharophagus degradans (strain 2-40 / ATCC 43961 / DSM 17024).